Reading from the N-terminus, the 201-residue chain is Small ribosomal subunit protein uS4 (201 aa).

Positions 93-155 constitute an S4 RNA-binding domain; it reads CRLDNIVYRM…SKSLSMFEVN (63 aa).

Belongs to the universal ribosomal protein uS4 family. Part of the 30S ribosomal subunit. Contacts protein S5. The interaction surface between S4 and S5 is involved in control of translational fidelity.

Its function is as follows. One of the primary rRNA binding proteins, it binds directly to 16S rRNA where it nucleates assembly of the body of the 30S subunit. In terms of biological role, with S5 and S12 plays an important role in translational accuracy. The polypeptide is Small ribosomal subunit protein uS4 (Elusimicrobium minutum (strain Pei191)).